A 198-amino-acid polypeptide reads, in one-letter code: dITP/XTP pyrophosphatase (198 aa).

7-12 provides a ligand contact to substrate; the sequence is THNPHK. 2 residues coordinate Mg(2+): E40 and D69. Residue D69 is the Proton acceptor of the active site. Substrate-binding positions include T70, 151 to 154, K174, and 179 to 180; these read FGYD and HR.

Belongs to the HAM1 NTPase family. In terms of assembly, homodimer. Mg(2+) is required as a cofactor.

The enzyme catalyses XTP + H2O = XMP + diphosphate + H(+). It carries out the reaction dITP + H2O = dIMP + diphosphate + H(+). The catalysed reaction is ITP + H2O = IMP + diphosphate + H(+). Its function is as follows. Pyrophosphatase that catalyzes the hydrolysis of nucleoside triphosphates to their monophosphate derivatives, with a high preference for the non-canonical purine nucleotides XTP (xanthosine triphosphate), dITP (deoxyinosine triphosphate) and ITP. Seems to function as a house-cleaning enzyme that removes non-canonical purine nucleotides from the nucleotide pool, thus preventing their incorporation into DNA/RNA and avoiding chromosomal lesions. The chain is dITP/XTP pyrophosphatase from Thermoanaerobacter pseudethanolicus (strain ATCC 33223 / 39E) (Clostridium thermohydrosulfuricum).